We begin with the raw amino-acid sequence, 596 residues long: NADH-quinone oxidoreductase subunit C/D (596 aa).

The NADH dehydrogenase I subunit C stretch occupies residues 1 to 186 (MVDIMCNDST…NPFILTKQKE (186 aa)). Positions 210–596 (NFMFLNLGPN…IDFVMSDVDR (387 aa)) are NADH dehydrogenase I subunit D.

It in the N-terminal section; belongs to the complex I 30 kDa subunit family. In the C-terminal section; belongs to the complex I 49 kDa subunit family. In terms of assembly, NDH-1 is composed of 13 different subunits. Subunits NuoB, CD, E, F, and G constitute the peripheral sector of the complex.

The protein resides in the cell inner membrane. The enzyme catalyses a quinone + NADH + 5 H(+)(in) = a quinol + NAD(+) + 4 H(+)(out). Its function is as follows. NDH-1 shuttles electrons from NADH, via FMN and iron-sulfur (Fe-S) centers, to quinones in the respiratory chain. The immediate electron acceptor for the enzyme in this species is believed to be ubiquinone. Couples the redox reaction to proton translocation (for every two electrons transferred, four hydrogen ions are translocated across the cytoplasmic membrane), and thus conserves the redox energy in a proton gradient. The polypeptide is NADH-quinone oxidoreductase subunit C/D (Blochmanniella pennsylvanica (strain BPEN)).